We begin with the raw amino-acid sequence, 39 residues long: Metallocarboxypeptidase inhibitor (39 aa).

A Pyrrolidone carboxylic acid modification is found at Q1. Disulfide bonds link C8/C24, C12/C27, and C18/C34.

Highly concentrated in tubers. Closely related but distinct forms of MCPI are present in leaves, stems and buds.

Functionally, may play a defensive role against insect attacks. Inhibits A.aegypti carboxypeptidase CPB1. This Solanum tuberosum (Potato) protein is Metallocarboxypeptidase inhibitor.